The sequence spans 384 residues: D-alanine--D-alanine ligase (384 aa).

One can recognise an ATP-grasp domain in the interval 167 to 374 (KKLFAAEGLP…YPTLLATMVD (208 aa)). 195–250 (CERLSLPVFVKPARGGSSIGISRVSSWGQLPSAIAYARRHDPKVIVEAAVNGRELE) contacts ATP. Residues D329, E341, and N343 each contribute to the Mg(2+) site.

Belongs to the D-alanine--D-alanine ligase family. Requires Mg(2+) as cofactor. The cofactor is Mn(2+).

It is found in the cytoplasm. It catalyses the reaction 2 D-alanine + ATP = D-alanyl-D-alanine + ADP + phosphate + H(+). The protein operates within cell wall biogenesis; peptidoglycan biosynthesis. Its function is as follows. Cell wall formation. The protein is D-alanine--D-alanine ligase of Mycobacterium leprae (strain TN).